Consider the following 247-residue polypeptide: Adenosylcobinamide-GDP ribazoletransferase (247 aa).

5 consecutive transmembrane segments (helical) span residues Ile-34–Leu-54, Cys-59–Phe-79, Gly-113–Leu-133, Met-138–Tyr-158, and Leu-187–Val-207.

This sequence belongs to the CobS family. The cofactor is Mg(2+).

Its subcellular location is the cell inner membrane. It catalyses the reaction alpha-ribazole + adenosylcob(III)inamide-GDP = adenosylcob(III)alamin + GMP + H(+). It carries out the reaction alpha-ribazole 5'-phosphate + adenosylcob(III)inamide-GDP = adenosylcob(III)alamin 5'-phosphate + GMP + H(+). The protein operates within cofactor biosynthesis; adenosylcobalamin biosynthesis; adenosylcobalamin from cob(II)yrinate a,c-diamide: step 7/7. Its function is as follows. Joins adenosylcobinamide-GDP and alpha-ribazole to generate adenosylcobalamin (Ado-cobalamin). Also synthesizes adenosylcobalamin 5'-phosphate from adenosylcobinamide-GDP and alpha-ribazole 5'-phosphate. This Salmonella choleraesuis (strain SC-B67) protein is Adenosylcobinamide-GDP ribazoletransferase.